Reading from the N-terminus, the 352-residue chain is Alanine racemase (352 aa).

The Proton acceptor; specific for D-alanine role is filled by lysine 34. Residue lysine 34 is modified to N6-(pyridoxal phosphate)lysine. Position 126 (arginine 126) interacts with substrate. Tyrosine 248 acts as the Proton acceptor; specific for L-alanine in catalysis. Methionine 296 is a substrate binding site.

It belongs to the alanine racemase family. Pyridoxal 5'-phosphate is required as a cofactor.

The enzyme catalyses L-alanine = D-alanine. The protein operates within amino-acid biosynthesis; D-alanine biosynthesis; D-alanine from L-alanine: step 1/1. Functionally, catalyzes the interconversion of L-alanine and D-alanine. May also act on other amino acids. This Deinococcus deserti (strain DSM 17065 / CIP 109153 / LMG 22923 / VCD115) protein is Alanine racemase (alr).